Reading from the N-terminus, the 147-residue chain is Hemoglobin subunit beta-2 (147 aa).

Val2 is subject to N-acetylvaline. The region spanning 3-147 (HLTDAEKSAV…VATALAHKYH (145 aa)) is the Globin domain. Position 18 is an N6-succinyllysine (Lys18). Tyr42 bears the Phosphotyrosine mark. Ser45, Ser51, and Ser53 each carry phosphoserine. Lys60 is subject to N6-succinyllysine. Positions 64 and 93 each coordinate heme b. Arg105 bears the Asymmetric dimethylarginine mark. The residue at position 124 (Thr124) is a Phosphothreonine.

Belongs to the globin family. As to quaternary structure, heterotetramer of two alpha chains and two beta chains. In terms of tissue distribution, red blood cells.

Involved in oxygen transport from the lung to the various peripheral tissues. The protein is Hemoglobin subunit beta-2 (Hbb-b2) of Mus musculus (Mouse).